The sequence spans 289 residues: Formamidopyrimidine-DNA glycosylase 1 (289 aa).

Pro-2 (schiff-base intermediate with DNA) is an active-site residue. Glu-3 (proton donor) is an active-site residue. The Proton donor; for beta-elimination activity role is filled by Lys-61. The DNA site is built by His-100, Arg-119, and Lys-165. Residues 251-285 form an FPG-type zinc finger; it reads DAYGREGENCRRCGAVIRRERFMNRSSFYCPRCQP. Arg-275 acts as the Proton donor; for delta-elimination activity in catalysis.

Belongs to the FPG family. Monomer. Zn(2+) serves as cofactor.

It carries out the reaction Hydrolysis of DNA containing ring-opened 7-methylguanine residues, releasing 2,6-diamino-4-hydroxy-5-(N-methyl)formamidopyrimidine.. The enzyme catalyses 2'-deoxyribonucleotide-(2'-deoxyribose 5'-phosphate)-2'-deoxyribonucleotide-DNA = a 3'-end 2'-deoxyribonucleotide-(2,3-dehydro-2,3-deoxyribose 5'-phosphate)-DNA + a 5'-end 5'-phospho-2'-deoxyribonucleoside-DNA + H(+). Its function is as follows. Involved in base excision repair of DNA damaged by oxidation or by mutagenic agents. Acts as a DNA glycosylase that recognizes and removes damaged bases. Has a preference for oxidized purines, such as 7,8-dihydro-8-oxoguanine (8-oxoG) when paired with C, G or T, as well as methyl-faPy (formanidopyrimidine residues) in poly(dG-dC) and spiroiminodihydantoin:C base pairs. Unlike its E.coli ortholog has no activity on 8-oxoG:A. Has AP (apurinic/apyrimidinic) lyase activity and introduces nicks in the DNA strand. Cleaves the DNA backbone by beta-delta elimination to generate a single-strand break at the site of the removed base with both 3'- and 5'-phosphates. Cleaves ssDNA containing an AP site. Complements the H(2)O(2) sensitivity of an M.smegmatis fpg disruption mutant; upon expression in M.smegmatis excises 8-oxoG from dsDNA. The chain is Formamidopyrimidine-DNA glycosylase 1 (fpg1) from Mycobacterium tuberculosis (strain ATCC 25618 / H37Rv).